The sequence spans 162 residues: uncharacterized protein (162 aa).

A signal peptide spans 1-23; the sequence is MLSLKSPAVLLSMVILVPLFALA.

This is an uncharacterized protein from Mycosarcoma maydis (Corn smut fungus).